The sequence spans 242 residues: MRLGVVTLFPEMFRAVTDFGVTGRAVKNGLLELQTWNPRDFTHDKHKTVDDRPYGGGPGMLMMVQPLRDAIHAAKAATGDSAKVIYLSPQGRKLTQQGVEELVKSDSLILVCGRYEGIDERIIQTEVDEEWSIGDYVLSGGELPAMTLIDSVSRLVPGVLGKKASAEQDSFSDGLLDCPHYTRPETLDNLDVPAVLLSGNHEHIRRWRLQQSLGRTLLRRPDLLENLALTDEQTKLLNEFVE.

S-adenosyl-L-methionine is bound by residues Gly-113 and 133 to 138 (IGDYVL).

Belongs to the RNA methyltransferase TrmD family. Homodimer.

The protein resides in the cytoplasm. It carries out the reaction guanosine(37) in tRNA + S-adenosyl-L-methionine = N(1)-methylguanosine(37) in tRNA + S-adenosyl-L-homocysteine + H(+). Functionally, specifically methylates guanosine-37 in various tRNAs. This chain is tRNA (guanine-N(1)-)-methyltransferase, found in Shewanella sediminis (strain HAW-EB3).